The following is a 266-amino-acid chain: uncharacterized protein (266 aa).

This is an uncharacterized protein from Methanocaldococcus jannaschii (strain ATCC 43067 / DSM 2661 / JAL-1 / JCM 10045 / NBRC 100440) (Methanococcus jannaschii).